Here is an 82-residue protein sequence, read N- to C-terminus: MIKLRLKRFGKKREVSYRIVAMHSTTRRDGRPLEELGFYNPRTDETRLDVPAIVKRLKEGAQPTDTVRSILTKAQVFEQLKA.

Belongs to the bacterial ribosomal protein bS16 family.

In Synechocystis sp. (strain ATCC 27184 / PCC 6803 / Kazusa), this protein is Small ribosomal subunit protein bS16.